The sequence spans 198 residues: Shikimate kinase (198 aa).

26–31 (GSGKSQ) contacts ATP. Serine 30 provides a ligand contact to Mg(2+). Residues aspartate 48, arginine 72, and glycine 94 each coordinate substrate. Arginine 132 contributes to the ATP binding site. Position 151 (arginine 151) interacts with substrate. Residue glutamine 167 participates in ATP binding.

It belongs to the shikimate kinase family. Monomer. Mg(2+) is required as a cofactor.

Its subcellular location is the cytoplasm. It carries out the reaction shikimate + ATP = 3-phosphoshikimate + ADP + H(+). It participates in metabolic intermediate biosynthesis; chorismate biosynthesis; chorismate from D-erythrose 4-phosphate and phosphoenolpyruvate: step 5/7. Its function is as follows. Catalyzes the specific phosphorylation of the 3-hydroxyl group of shikimic acid using ATP as a cosubstrate. This chain is Shikimate kinase, found in Prochlorococcus marinus (strain NATL2A).